Reading from the N-terminus, the 764-residue chain is Putative alpha-1,3-mannosyltransferase MNN13 (764 aa).

The Cytoplasmic segment spans residues 1-13 (MIKPILGTKKIRR). A helical membrane pass occupies residues 14–34 (VICIIIGLFCILLLIGIFKHN). Residues 35 to 764 (STNSVNNEAS…YLGDVWVGKY (730 aa)) are Lumenal-facing. N45 and N204 each carry an N-linked (GlcNAc...) asparagine glycan.

This sequence belongs to the MNN1/MNT family.

The protein localises to the golgi apparatus membrane. The protein operates within protein modification; protein glycosylation. Responsible for addition of the terminal mannose residues to the outer chain of core N-linked polysaccharides and to O-linked mannotriose. Implicated in late Golgi modifications. This Candida albicans (strain SC5314 / ATCC MYA-2876) (Yeast) protein is Putative alpha-1,3-mannosyltransferase MNN13 (MNN13).